Reading from the N-terminus, the 818-residue chain is Serine/threonine-protein kinase PTK2/STK2 (818 aa).

A compositionally biased stretch (polar residues) spans 28 to 39 (NSSSHTDNSSLL). 2 disordered regions span residues 28–100 (NSSS…GSVS) and 117–177 (NPYL…SHHF). Residue Thr-56 is modified to Phosphothreonine. Low complexity predominate over residues 57–81 (SPSISGSGSGGNSPSSSAGARQRSA). 2 positions are modified to phosphoserine: Ser-59 and Ser-80. Residues 136–160 (TRDRDRAVLDREKEKERARNKERNT) show a composition bias toward basic and acidic residues. In terms of domain architecture, Protein kinase spans 255 to 562 (DTDNKPIGSG…MDDLFNDPFF (308 aa)). Residues 261-269 (IGSGGSSEV) and Lys-285 contribute to the ATP site. Asp-388 (proton acceptor) is an active-site residue. Positions 585 to 595 (STSTNDFSENS) are enriched in polar residues. Positions 585–795 (STSTNDFSEN…SVSSSKKKKV (211 aa)) are disordered. Ser-623 and Ser-632 each carry phosphoserine. Basic and acidic residues-rich tracts occupy residues 638–651 (KVKD…HDVG) and 659–685 (TKPK…KVIE). Residue Ser-694 is modified to Phosphoserine. Thr-700 carries the phosphothreonine modification. A Phosphoserine modification is found at Ser-711. Over residues 727–736 (TPTTPTHNGP) the composition is skewed to low complexity. The residue at position 737 (Thr-737) is a Phosphothreonine. Phosphoserine occurs at positions 752, 755, 778, and 781. The segment covering 755–767 (SLKSETPASTKNF) has biased composition (polar residues). Residues 768–789 (SAPNVSSSSNSLRSLGSPSVSS) are compositionally biased toward low complexity.

Belongs to the protein kinase superfamily. Ser/Thr protein kinase family.

It localises to the nucleus. The protein localises to the cytoplasm. The enzyme catalyses L-seryl-[protein] + ATP = O-phospho-L-seryl-[protein] + ADP + H(+). The catalysed reaction is L-threonyl-[protein] + ATP = O-phospho-L-threonyl-[protein] + ADP + H(+). Its function is as follows. Essential determinant for high-affinity spermidine transport. Required for the activation of the plasma membrane proton pump PMA1 via phosphorylation of 'Ser-899'. In Saccharomyces cerevisiae (strain ATCC 204508 / S288c) (Baker's yeast), this protein is Serine/threonine-protein kinase PTK2/STK2 (PTK2).